The chain runs to 305 residues: Serine/threonine-protein kinase 16 (305 aa).

Glycine 2 is lipidated: N-myristoyl glycine. Residues cysteine 6 and cysteine 8 are each lipidated (S-palmitoyl cysteine). One can recognise a Protein kinase domain in the interval 20-293 (YLFVQKLGEG…PVLLSQLEAL (274 aa)). ATP contacts are provided by residues 26–34 (LGEGGFSYV) and lysine 49. The active-site Proton acceptor is the aspartate 148. An activation loop region spans residues 166–202 (DLGSMNQACIQVEGSRQALALQDWAAQRCTISYRAPE). The residue at position 197 (serine 197) is a Phosphoserine; by autocatalysis. At tyrosine 198 the chain carries Phosphotyrosine; by autocatalysis.

This sequence belongs to the protein kinase superfamily. Ser/Thr protein kinase family. Monomer. Interacts with DRG1 (via its N-terminal); the interaction phosphorylates DRG1. In terms of processing, mainly autophosphorylated on serine/threonine residues. Also autophosphorylated on Tyr-198. Expressed in heart, liver, brain, spleen, lung, skeletal muscle, kidney and testis.

The protein localises to the cytoplasm. It localises to the perinuclear region. It is found in the membrane. The catalysed reaction is L-seryl-[protein] + ATP = O-phospho-L-seryl-[protein] + ADP + H(+). The enzyme catalyses L-threonyl-[protein] + ATP = O-phospho-L-threonyl-[protein] + ADP + H(+). It carries out the reaction L-tyrosyl-[protein] + ATP = O-phospho-L-tyrosyl-[protein] + ADP + H(+). Functionally, membrane-associated protein kinase that phosphorylates on serine and threonine residues. In vitro substrates include DRG1, ENO1 and EIF4EBP1. Also autophosphorylates. May be involved in secretory vesicle trafficking or intracellular signaling. May have a role in regulating stromal-epithelial interactions that occur during ductal morphogenesis in the mammary gland. May be involved in TGF-beta signaling. Able to autophosphorylate on Tyr residue; it is however unclear whether it has tyrosine-protein kinase toward other proteins. This chain is Serine/threonine-protein kinase 16 (Stk16), found in Rattus norvegicus (Rat).